The primary structure comprises 136 residues: Large ribosomal subunit protein uL16c (136 aa).

It belongs to the universal ribosomal protein uL16 family. In terms of assembly, part of the 50S ribosomal subunit.

Its subcellular location is the plastid. It is found in the chloroplast. The protein is Large ribosomal subunit protein uL16c of Chlamydomonas reinhardtii (Chlamydomonas smithii).